Consider the following 273-residue polypeptide: Large ribosomal subunit protein uL2 (273 aa).

The interval 228–273 (VDHPHGGGEGKTSGGRHPVTPWGFPTKGKKTRKNKRTSKFIVKKRK) is disordered. Positions 254 to 273 (KGKKTRKNKRTSKFIVKKRK) are enriched in basic residues.

The protein belongs to the universal ribosomal protein uL2 family. In terms of assembly, part of the 50S ribosomal subunit. Forms a bridge to the 30S subunit in the 70S ribosome.

One of the primary rRNA binding proteins. Required for association of the 30S and 50S subunits to form the 70S ribosome, for tRNA binding and peptide bond formation. It has been suggested to have peptidyltransferase activity; this is somewhat controversial. Makes several contacts with the 16S rRNA in the 70S ribosome. This Rickettsia massiliae (strain Mtu5) protein is Large ribosomal subunit protein uL2.